A 507-amino-acid chain; its full sequence is tRNA-2-methylthio-N(6)-dimethylallyladenosine synthase (507 aa).

One can recognise an MTTase N-terminal domain in the interval 13-129; that stretch reads RTYQVRTYGC…LPALLERARH (117 aa). The [4Fe-4S] cluster site is built by Cys22, Cys58, Cys92, Cys166, Cys170, and Cys173. One can recognise a Radical SAM core domain in the interval 152 to 388; that stretch reads RESAYAAWVS…IALQESVTLE (237 aa). In terms of domain architecture, TRAM spans 391-462; that stretch reads QKQIGRMIEV…PHHLIADDGV (72 aa). The segment covering 459-478 has biased composition (basic and acidic residues); the sequence is DDGVRSHRRTRAGDAHEAGK. Positions 459–492 are disordered; that stretch reads DDGVRSHRRTRAGDAHEAGKKPSTPGIGLGMPAI.

The protein belongs to the methylthiotransferase family. MiaB subfamily. As to quaternary structure, monomer. [4Fe-4S] cluster is required as a cofactor.

It localises to the cytoplasm. The enzyme catalyses N(6)-dimethylallyladenosine(37) in tRNA + (sulfur carrier)-SH + AH2 + 2 S-adenosyl-L-methionine = 2-methylsulfanyl-N(6)-dimethylallyladenosine(37) in tRNA + (sulfur carrier)-H + 5'-deoxyadenosine + L-methionine + A + S-adenosyl-L-homocysteine + 2 H(+). Its function is as follows. Catalyzes the methylthiolation of N6-(dimethylallyl)adenosine (i(6)A), leading to the formation of 2-methylthio-N6-(dimethylallyl)adenosine (ms(2)i(6)A) at position 37 in tRNAs that read codons beginning with uridine. This chain is tRNA-2-methylthio-N(6)-dimethylallyladenosine synthase, found in Mycobacteroides abscessus (strain ATCC 19977 / DSM 44196 / CCUG 20993 / CIP 104536 / JCM 13569 / NCTC 13031 / TMC 1543 / L948) (Mycobacterium abscessus).